The chain runs to 217 residues: Translation initiation factor IF-3 (217 aa).

The protein belongs to the IF-3 family. As to quaternary structure, monomer.

The protein resides in the cytoplasm. IF-3 binds to the 30S ribosomal subunit and shifts the equilibrium between 70S ribosomes and their 50S and 30S subunits in favor of the free subunits, thus enhancing the availability of 30S subunits on which protein synthesis initiation begins. This chain is Translation initiation factor IF-3, found in Synechococcus sp. (strain CC9902).